The primary structure comprises 364 residues: Endoglucanase A (364 aa).

Glu169 (proton donor) is an active-site residue. Glu293 serves as the catalytic Nucleophile.

It belongs to the glycosyl hydrolase 5 (cellulase A) family.

The protein localises to the cytoplasm. It catalyses the reaction Endohydrolysis of (1-&gt;4)-beta-D-glucosidic linkages in cellulose, lichenin and cereal beta-D-glucans.. It carries out the reaction Endohydrolysis of (1-&gt;4)-beta-D-xylosidic linkages in xylans.. Functionally, hydrolyzes both carboxymethylcellulose and xylan. Probably has a role in hydrolyzing oligosaccharides derived from cellulose, which are transported across the cell wall. The polypeptide is Endoglucanase A (celA) (Ruminococcus albus).